A 119-amino-acid chain; its full sequence is Large ribosomal subunit protein bL20 (119 aa).

The protein belongs to the bacterial ribosomal protein bL20 family.

In terms of biological role, binds directly to 23S ribosomal RNA and is necessary for the in vitro assembly process of the 50S ribosomal subunit. It is not involved in the protein synthesizing functions of that subunit. In Nitrobacter hamburgensis (strain DSM 10229 / NCIMB 13809 / X14), this protein is Large ribosomal subunit protein bL20.